Consider the following 99-residue polypeptide: MAEGGFDPCECICSHEHAMRRLINLLRQSQSYCTDTECLRELPGPSGDSGISITVILMAWMVIAVLLFLLRPPNLRGSSLPGKPSSPHSGQDPPAPPVD.

The Lumenal segment spans residues 1-49 (MAEGGFDPCECICSHEHAMRRLINLLRQSQSYCTDTECLRELPGPSGDS). The chain crosses the membrane as a helical span at residues 50–70 (GISITVILMAWMVIAVLLFLL). Topologically, residues 71 to 99 (RPPNLRGSSLPGKPSSPHSGQDPPAPPVD) are cytoplasmic. Residues 77–99 (GSSLPGKPSSPHSGQDPPAPPVD) form a disordered region.

Its subcellular location is the endoplasmic reticulum membrane. This is Small integral membrane protein 14 (Smim14) from Rattus norvegicus (Rat).